A 555-amino-acid chain; its full sequence is Embryonic protein DC-8 (555 aa).

A compositionally biased stretch (basic and acidic residues) spans 83-115 (RENTDYAYDKGREGGDVAAQKAEEAKEKAKMAK). 2 disordered regions span residues 83 to 118 (RENT…KDTT) and 132 to 151 (KAEE…KEKA). 17 consecutive repeat copies span residues 97–114 (GDVA…AKMA), 115–125 (KDTTMGKAGEY), 126–140 (KDYT…KEKA), 141–154 (AQKA…AGEY), 155–176 (KNYT…AGEY), 177–191 (KDYA…KDTT), 192–205 (AQKA…TGEY), 206–216 (KDYAAQKAAEA), 217–237 (KVLA…DGEY), 238–259 (KDYA…TGEY), 260–281 (KDYA…AKEY), 282–303 (KEYA…TGEY), 304–325 (KDYS…TKEY), 326–343 (KDYT…TMEK), 344–358 (AKEA…TGEY), 359–376 (KDYA…TVEK), and 377–391 (AKEG…MTEL). The 17 X approximate tandem repeats stretch occupies residues 97-391 (GDVAAQKAEE…DTTVGKMTEL (295 aa)). A disordered region spans residues 184–204 (AAEAKDTTAQKAAEAKEKTGE). Positions 444–465 (LQEEGVKDEAKQRAEADRETAG) are enriched in basic and acidic residues. A disordered region spans residues 444 to 472 (LQEEGVKDEAKQRAEADRETAGDRGSAAK).

It belongs to the LEA type 4 family.

It localises to the cytoplasm. It is found in the secreted. The protein localises to the cell wall. Functionally, may play a role in late embryogeny. This chain is Embryonic protein DC-8, found in Daucus carota (Wild carrot).